The sequence spans 480 residues: Argininosuccinate lyase (480 aa).

Positions 1 to 17 (MTDTTPSADLGASSQQP) are enriched in polar residues. The tract at residues 1 to 24 (MTDTTPSADLGASSQQPAKAWSGR) is disordered.

It belongs to the lyase 1 family. Argininosuccinate lyase subfamily.

The protein resides in the cytoplasm. It catalyses the reaction 2-(N(omega)-L-arginino)succinate = fumarate + L-arginine. The protein operates within amino-acid biosynthesis; L-arginine biosynthesis; L-arginine from L-ornithine and carbamoyl phosphate: step 3/3. This Azoarcus sp. (strain BH72) protein is Argininosuccinate lyase.